We begin with the raw amino-acid sequence, 620 residues long: Probable potassium transport system protein Kup (620 aa).

A run of 12 helical transmembrane segments spans residues leucine 7–isoleucine 27, valine 44–leucine 64, phenylalanine 98–threonine 118, proline 135–phenylalanine 155, leucine 166–isoleucine 186, glycine 201–leucine 221, tryptophan 245–leucine 265, leucine 278–alanine 298, isoleucine 335–phenylalanine 355, leucine 361–tyrosine 381, valine 394–alanine 414, and leucine 417–threonine 437.

This sequence belongs to the HAK/KUP transporter (TC 2.A.72) family.

It is found in the cell inner membrane. The enzyme catalyses K(+)(in) + H(+)(in) = K(+)(out) + H(+)(out). Functionally, transport of potassium into the cell. Likely operates as a K(+):H(+) symporter. The protein is Probable potassium transport system protein Kup of Chlorobium chlorochromatii (strain CaD3).